We begin with the raw amino-acid sequence, 833 residues long: Transcription factor MBP1 (833 aa).

The region spanning 5-111 (IYSARYSGVD…FTQTDGSASP (107 aa)) is the HTH APSES-type domain. Residues 36-57 (ATHILKAANFAKAKRTRILEKE) constitute a DNA-binding region (H-T-H motif). Disordered stretches follow at residues 104–223 (QTDG…QSPT) and 280–329 (QQSS…SPII). A Phosphoserine modification is found at Ser110. The segment covering 115–129 (PKHHHASKVDRKKAI) has biased composition (basic residues). Positions 139–149 (ETKRNNKKAEE) are enriched in basic and acidic residues. Over residues 201-223 (PNSSISTTQLPSIRSTMGPQSPT) the composition is skewed to polar residues. The segment covering 280-307 (QQSSLIQTQQTESMATSVSSSPSLPTSP) has biased composition (low complexity). Residue Thr325 is modified to Phosphothreonine. Phosphoserine is present on residues Ser326 and Ser330. ANK repeat units follow at residues 394–423 (ELHTAFHWACSMGNLPIAEALYEAGTSIRS) and 512–541 (NGDTALHIASKNGDVVFFNTLVKMGALTTI). At Ser827 the chain carries Phosphoserine.

Component of the transcription complex MCB-binding factor (MBF) composed of SWI6 and MBP1. Interacts with MSA1.

The protein resides in the nucleus. Its function is as follows. Binds to MCB elements (Mlu I cell cycle box) found in the promoter of most DNA synthesis genes. Transcriptional activation by MBF has an important role in the transition from G1 to S phase. It may have a dual role in that it behaves as an activator of transcription at the G1-S boundary and as a repressor during other stages of the cell cycle. In Saccharomyces cerevisiae (strain ATCC 204508 / S288c) (Baker's yeast), this protein is Transcription factor MBP1 (MBP1).